The following is a 564-amino-acid chain: MDEKQLVSQALSAAIDGVLGVEQIAAIIEKPKSSDLGDLAFPAFQLAKTLRKSPQIIAGEIAEKIDTKGFEKVIAVGPYVNFFLDKNATASEVIREVLTEGEHYGDANIGQGGNVPIDMSAPNIAKPFSIGHLRSTVIGDSIAKIYEKLGYQPIKINHLGDWGKQFGLLITAYKKYGDEATITANPIDELLKLYVKINAEAKEDPEVDEEGRQWFLKMEQGDEEALRIWKWFSDVSLIEFNRIYGKLGVSFDHFMGESFYSDKMDAIVEDLESKNLLHESKGALIVDLEKYNLNPALIKKTDGATLYITRDLATAAYRKKTFNFVKSLYVVGGEQTNHFKQLKAVLKEAGYDWSDDMVHVPFGMVTQGGKKFSTRKGHVVKLEMALDEAVDRAEKQIEAKNPNLENKEEVAKQVGVGAVKFYDLKTDRNNGYDFDLDEMVSFEGETGPYVQYAHARIQSILRKANRKVDINNISLAVSDAEAWEIVKALKEFPNVVKRAADNYEPSVIAKYAISLAQAFNKYYAHVRILEDDAQLDGRLALISATSIVLKEALRLLGVAAPENM.

The 'HIGH' region motif lies at 122-132 (PNIAKPFSIGH).

The protein belongs to the class-I aminoacyl-tRNA synthetase family. In terms of assembly, monomer.

The protein localises to the cytoplasm. It catalyses the reaction tRNA(Arg) + L-arginine + ATP = L-arginyl-tRNA(Arg) + AMP + diphosphate. In Lactococcus lactis subsp. lactis (strain IL1403) (Streptococcus lactis), this protein is Arginine--tRNA ligase.